The sequence spans 183 residues: Adenine phosphoribosyltransferase (183 aa).

The protein belongs to the purine/pyrimidine phosphoribosyltransferase family. As to quaternary structure, homodimer.

Its subcellular location is the cytoplasm. It carries out the reaction AMP + diphosphate = 5-phospho-alpha-D-ribose 1-diphosphate + adenine. Its pathway is purine metabolism; AMP biosynthesis via salvage pathway; AMP from adenine: step 1/1. Its function is as follows. Catalyzes a salvage reaction resulting in the formation of AMP, that is energically less costly than de novo synthesis. This chain is Adenine phosphoribosyltransferase, found in Klebsiella pneumoniae subsp. pneumoniae (strain ATCC 700721 / MGH 78578).